We begin with the raw amino-acid sequence, 295 residues long: Ubiquinol-cytochrome c reductase complex assembly factor 1 (295 aa).

It belongs to the CBP3 family. In terms of assembly, interacts with UQCC2. Interacts with UQCC3. Forms a complex, named COMB/coordinator of mitochondrial CYTB biogenesis, composed of UQCC1, UQCC2, UQCC4, UQCC5 and UQCC6; stabilizes nascent cytochrome b/MT-CYB and promotes its membrane insertion. Forms a complex, named COMA, composed of UQCC1, UQCC2 and UQCC4; activates MT-CYB translation. Forms a complex, named COMC, composed of UQCC1, UQCC2; UQCC3 and UQCC4; mediates MT-CYB hemylation and association with the first nuclear-encoded CIII subunit UQCRQ. As to expression, in the brain it is restricted to the olfactory bulb, the hippocampus, the piriform cortex and the Purkinje cells.

The protein localises to the mitochondrion inner membrane. It localises to the cytoplasmic vesicle. Its function is as follows. Required for the assembly of the ubiquinol-cytochrome c reductase complex (mitochondrial respiratory chain complex III or cytochrome b-c1 complex). Involved in cytochrome b translation and/or stability. The sequence is that of Ubiquinol-cytochrome c reductase complex assembly factor 1 (Uqcc1) from Mus musculus (Mouse).